Here is a 191-residue protein sequence, read N- to C-terminus: MSAANATGEGQDAIAWNREMLPPGPEQDAVIKGITGEITEKGFVVASLDKLVNWGRTGSLWPMSFGLACCAVEMIHAYMPRYDLDRMGIIPRGSPRQSDVMIVAGTLTNKMAPALRRVYDQMAEPRWVISMGSCANGGGYYHYSYSVVRGCDRIVPVDVYVPGCPPTAEALIYGIFQLQKKIRRTGTILRG.

Residues C69, C70, C134, and C164 each coordinate [4Fe-4S] cluster.

Belongs to the complex I 20 kDa subunit family. NDH-1 is composed of 14 different subunits. Subunits NuoB, C, D, E, F, and G constitute the peripheral sector of the complex. It depends on [4Fe-4S] cluster as a cofactor.

It localises to the cell inner membrane. The catalysed reaction is a quinone + NADH + 5 H(+)(in) = a quinol + NAD(+) + 4 H(+)(out). Its function is as follows. NDH-1 shuttles electrons from NADH, via FMN and iron-sulfur (Fe-S) centers, to quinones in the respiratory chain. Couples the redox reaction to proton translocation (for every two electrons transferred, four hydrogen ions are translocated across the cytoplasmic membrane), and thus conserves the redox energy in a proton gradient. The protein is NADH-quinone oxidoreductase subunit B 2 of Gluconacetobacter diazotrophicus (strain ATCC 49037 / DSM 5601 / CCUG 37298 / CIP 103539 / LMG 7603 / PAl5).